The chain runs to 510 residues: Beta-galactosidase (510 aa).

Catalysis depends on glutamate 210, which acts as the Proton donor. Catalysis depends on glutamate 414, which acts as the Nucleophile.

It belongs to the glycosyl hydrolase 1 family.

The enzyme catalyses Hydrolysis of terminal non-reducing beta-D-galactose residues in beta-D-galactosides.. The protein is Beta-galactosidase of Pyrococcus woesei.